We begin with the raw amino-acid sequence, 390 residues long: Protein shisa-9 (390 aa).

The signal sequence occupies residues M1–A22. Residues Q23–K134 lie on the Extracellular side of the membrane. N-linked (GlcNAc...) asparagine glycans are attached at residues N40 and N74. Residues T135–F155 form a helical membrane-spanning segment. Over T156–V390 the chain is Cytoplasmic.

It belongs to the shisa family. SHISA9 subfamily. As to quaternary structure, component of some AMPA receptors (ionotropic glutamate receptors) complex.

It is found in the cell projection. The protein localises to the dendritic spine membrane. The protein resides in the synapse. Functionally, regulator of short-term neuronal synaptic plasticity in the dentate gyrus. Associates with AMPA receptors (ionotropic glutamate receptors) in synaptic spines and promotes AMPA receptor desensitization at excitatory synapses. This chain is Protein shisa-9 (shisa9), found in Xenopus tropicalis (Western clawed frog).